The primary structure comprises 211 residues: Hypoxanthine-guanine phosphoribosyltransferase (211 aa).

The segment at 1 to 20 (MSNSAKSPSGPVGDEGRRNY) is disordered. GMP contacts are provided by residues K66, 125–133 (EDIVDSAIT), K157, and D185. The active-site Proton acceptor is the D129. Residue D185 coordinates Mg(2+).

It belongs to the purine/pyrimidine phosphoribosyltransferase family. Requires Mg(2+) as cofactor.

The protein resides in the cytoplasm. It catalyses the reaction IMP + diphosphate = hypoxanthine + 5-phospho-alpha-D-ribose 1-diphosphate. The enzyme catalyses GMP + diphosphate = guanine + 5-phospho-alpha-D-ribose 1-diphosphate. It functions in the pathway purine metabolism; IMP biosynthesis via salvage pathway; IMP from hypoxanthine: step 1/1. Its function is as follows. Converts guanine to guanosine monophosphate, and hypoxanthine to inosine monophosphate. Transfers the 5-phosphoribosyl group from 5-phosphoribosylpyrophosphate onto the purine. Plays a central role in the generation of purine nucleotides through the purine salvage pathway. The sequence is that of Hypoxanthine-guanine phosphoribosyltransferase from Leishmania donovani.